An 841-amino-acid chain; its full sequence is Axin-1 (841 aa).

The disordered stretch occupies residues 1–78; it reads MNIQGKGFPL…GYEPEGSASP (78 aa). A compositionally biased stretch (polar residues) spans 44–61; sequence FYSSKSDAVRNETSTATP. An RGS domain is found at 88-211; sequence SLHSLLDDQD…LKSDIYLEYT (124 aa). The disordered stretch occupies residues 217-269; it reads SPKIYSDPSSGSGTGKGLPGYLPTLNEDEEWKCDQDTEPEASRDSAPSSRLTQ. Basic and acidic residues predominate over residues 248 to 259; that stretch reads KCDQDTEPEASR. Residues 348 to 433 are interaction with GSK3B; the sequence is LRKQHRREMQ…DADISSGPSV (86 aa). The interaction with beta-catenin stretch occupies residues 434–508; that stretch reads ISHKMPSAQP…RSPESGHLGK (75 aa). Disordered stretches follow at residues 482–527, 613–635, and 727–756; these read KTPG…TTKS, NIKK…SPED, and RRLE…SGAS. Residues 727–736 show a composition bias toward basic and acidic residues; the sequence is RRLEEEEKRA. The DIX domain occupies 759–841; that stretch reads CENIVVAYYF…KIIGKVEKID (83 aa).

In terms of assembly, homodimer. ADP-ribosylated by tankyrase TNKS and TNKS2. Poly-ADP-ribosylated protein is recognized by RNF146, followed by ubiquitination at 'Lys-48' and subsequent activation of the Wnt signaling pathway. Post-translationally, ubiquitinated by RNF146 when poly-ADP-ribosylated, leading to its degradation and subsequent activation of the Wnt signaling pathway.

It is found in the cytoplasm. The protein resides in the nucleus. The protein localises to the membrane. Its subcellular location is the cell membrane. Component of the beta-catenin destruction complex required for regulating CTNNB1 levels through phosphorylation and ubiquitination, and modulating Wnt-signaling. Controls dorsoventral patterning via two opposing effects; down-regulates CTNNB1 to inhibit the Wnt signaling pathway and ventralize embryos, but also dorsalizes embryos by activating a Wnt-independent JNK signaling pathway. The polypeptide is Axin-1 (AXIN1) (Gallus gallus (Chicken)).